The chain runs to 119 residues: Circadian clock oscillator protein KaiB (119 aa).

The protein belongs to the KaiB family. May undergo a major conformational rearrangment; in the free state forms homooligomers. When bound to KaiC switches to a monomeric thioredoxin-fold (KaiB(fs)). The active oscillator complex is probably KaiC(6):KaiB(6).

Functionally, component of the KaiBC clock protein complex, which constitutes the main circadian regulator in cyanobacteria; it may modify the ATPase activity of KaiC. May be a metamorphic protein which reversibly switches between an inactive tetrameric fold and a rare, thioredoxin-like monomeric fold (KaiB(fs)). KaiB(fs) binds phospho-KaiC, and perhaps clock output effectors. The sequence is that of Circadian clock oscillator protein KaiB from Prochlorococcus marinus (strain MIT 9303).